A 493-amino-acid chain; its full sequence is Lysine--tRNA ligase (493 aa).

Mg(2+) is bound by residues glutamate 402 and glutamate 409.

Belongs to the class-II aminoacyl-tRNA synthetase family. As to quaternary structure, homodimer. It depends on Mg(2+) as a cofactor.

It localises to the cytoplasm. It carries out the reaction tRNA(Lys) + L-lysine + ATP = L-lysyl-tRNA(Lys) + AMP + diphosphate. In Fusobacterium nucleatum subsp. nucleatum (strain ATCC 25586 / DSM 15643 / BCRC 10681 / CIP 101130 / JCM 8532 / KCTC 2640 / LMG 13131 / VPI 4355), this protein is Lysine--tRNA ligase.